A 362-amino-acid chain; its full sequence is sn-glycerol-3-phosphate import ATP-binding protein UgpC (362 aa).

An ABC transporter domain is found at 4 to 235 (LKLQAVTKSY…PATLFVASFI (232 aa)). 37–44 (GPSGCGKS) is an ATP binding site.

This sequence belongs to the ABC transporter superfamily. sn-glycerol-3-phosphate importer (TC 3.A.1.1.3) family. As to quaternary structure, the complex is composed of two ATP-binding proteins (UgpC), two transmembrane proteins (UgpA and UgpE) and a solute-binding protein (UgpB).

Its subcellular location is the cell inner membrane. It catalyses the reaction sn-glycerol 3-phosphate(out) + ATP + H2O = sn-glycerol 3-phosphate(in) + ADP + phosphate + H(+). Part of the ABC transporter complex UgpBAEC involved in sn-glycerol-3-phosphate (G3P) import. Responsible for energy coupling to the transport system. This chain is sn-glycerol-3-phosphate import ATP-binding protein UgpC, found in Yersinia enterocolitica serotype O:8 / biotype 1B (strain NCTC 13174 / 8081).